Consider the following 129-residue polypeptide: Protein Wnt-6 (129 aa).

Disulfide bonds link C3/C17, C5/C12, C75/C106, C91/C101, and C128/C129. Residue S9 is the site of O-palmitoleoyl serine; by PORCN attachment. Residue N92 is glycosylated (N-linked (GlcNAc...) asparagine).

Belongs to the Wnt family. In terms of processing, palmitoleoylation is required for efficient binding to frizzled receptors. Depalmitoleoylation leads to Wnt signaling pathway inhibition. In terms of tissue distribution, at tailbud: dorsal, punctate; in adult: brain and heart.

Its subcellular location is the secreted. The protein localises to the extracellular space. It localises to the extracellular matrix. Its function is as follows. Ligand for members of the frizzled family of seven transmembrane receptors. Probable developmental protein. May be a signaling molecule which affects the development of discrete regions of tissues. Is likely to signal over only few cell diameters. This chain is Protein Wnt-6 (wnt6), found in Xenopus laevis (African clawed frog).